Reading from the N-terminus, the 120-residue chain is MAGVKTFELRTKSKEQLESQLVELKQELATLKVQKLQRPSLPRIHTVRKNIARVLTVINLNQRENVRAFYAGKKYIPKDLRAKKTRALRRKLTKFEASQETEKARKQRIAFPQRKFAIKA.

The protein belongs to the universal ribosomal protein uL29 family. Component of the large ribosomal subunit. Mature ribosomes consist of a small (40S) and a large (60S) subunit. The 40S subunit contains about 32 different proteins and 1 molecule of RNA (18S). The 60S subunit contains 45 different proteins and 3 molecules of RNA (25S, 5.8S and 5S).

It localises to the cytoplasm. Functionally, component of the ribosome, a large ribonucleoprotein complex responsible for the synthesis of proteins in the cell. The small ribosomal subunit (SSU) binds messenger RNAs (mRNAs) and translates the encoded message by selecting cognate aminoacyl-transfer RNA (tRNA) molecules. The large subunit (LSU) contains the ribosomal catalytic site termed the peptidyl transferase center (PTC), which catalyzes the formation of peptide bonds, thereby polymerizing the amino acids delivered by tRNAs into a polypeptide chain. The nascent polypeptides leave the ribosome through a tunnel in the LSU and interact with protein factors that function in enzymatic processing, targeting, and the membrane insertion of nascent chains at the exit of the ribosomal tunnel. This is Large ribosomal subunit protein uL29 from Candida albicans (strain SC5314 / ATCC MYA-2876) (Yeast).